The chain runs to 1197 residues: MVTHNVKINKHVTRRSYSSAKEVLEIPPLTEVQTASYKWFMDKGIKEMFNDIMPIEDFAGKLSLEYVDYSLGEPKYSLKESREQAVNYAAPLHVTLRLTNKETGEIKSQDVYFGEFPLMTEYGSFVINGAERVVVSQLVRSPGIYYNEDTDKTGRVVYGTTVIPNRGAWLELDTDAKGVANIRIDRTRKLPITELIRSFGFGSDSEIQDIFGDEIDSLNLAIEKDVHKDPSMSRVGEALEDIYERLRPGEPKTIDSSRSLLAARFFDPKRYDLGNVGRYKVNKKLSLKSRLLGQTLAEDILNSDGEVVVPKDTKIDKKSMKLISPLLDEEDFHVENLQPDEEGVLPDPIKVQTIKIFSQVDPTKVIKLIGNGHIDESIHHILPADIIAGMNYFFNLQEGVGATDDIDHLGNRRIRSVGELLENQFRIGLTRMERVVRERMSIQDSDTVTPQQLINIRPVVAVVKEFFGSSQLSQFMDQTNPLGELNHKRRLSALGPGGLTRDRAGYEVRDVHYSHYGRIDPIETPEGPNIGLITSLAVYGRINEYGFIETPYRRVDWDTHKVTDKIDYLTADVEDNYTIAQANSPLNDDGSFTNPTVTARHGDNNIETPIEDVDYMDVSPKQVVAVSTAAIPFLENDDSNRALMGANMQRQAVPLVAPHSPIVGTGIEYRAAVDSGLAQIAEEKGTVEYVDGRTIKVREEDGTLHEYPLMKFQRSNGGKNYNQTPIVKVGEKIEKGEVLADGPAMENGELALGQNPVIAFMTWHGYNFEDAIVLNERLVRDDVYTSIHIEEHESEARDTKLGPEEITREIPNVGEDQLKDLDDSGIIRIGAEVEDGDILVGKITPKGVTELSAEERLLHAIFGEKAREVRDTSLRVPHGGGGIIQDVEIFTRENGDELAPGVNMMVRVFIAQKRKIQVGDKMAGRHGNKGTVSVVVPEEDMPFMPDGRPIDILLSPMGVPSRMNIGQILELHLGMAAKKLGIKIMTPVFDGASDDEIIDALKEAGLDEDGKTVLYDGQTGEAFDNRISVGVMHYMKLAHMVDDKIHARSIGPYSLVTQQPLGGKAQFGGQRFGEMEVWALEAYGAAYTLQEILTYKSDDVRGRNKVFESIVKGQAIPKPGVPESFRVLVKELQALGLDMKVLNGKGQEVKMAQMDEDDNVATVDALEQIAKEKPDLFKGDDDDTPRIPATKLDEENV.

The span at Q581 to V597 shows a compositional bias: polar residues. Disordered regions lie at residues Q581 to D603 and E1172 to V1197.

The protein belongs to the RNA polymerase beta chain family. As to quaternary structure, the RNAP catalytic core consists of 2 alpha, 1 beta, 1 beta' and 1 omega subunit. When a sigma factor is associated with the core the holoenzyme is formed, which can initiate transcription.

It catalyses the reaction RNA(n) + a ribonucleoside 5'-triphosphate = RNA(n+1) + diphosphate. Functionally, DNA-dependent RNA polymerase catalyzes the transcription of DNA into RNA using the four ribonucleoside triphosphates as substrates. The protein is DNA-directed RNA polymerase subunit beta of Oenococcus oeni (strain ATCC BAA-331 / PSU-1).